The chain runs to 400 residues: uncharacterized protein (400 aa).

This is an uncharacterized protein from Saccharomyces cerevisiae (strain ATCC 204508 / S288c) (Baker's yeast).